We begin with the raw amino-acid sequence, 72 residues long: ATP synthase subunit c (72 aa).

2 helical membrane passes run 1-21 and 49-69; these read MSLG…GAGI and FIGV…AFIV.

This sequence belongs to the ATPase C chain family. F-type ATPases have 2 components, F(1) - the catalytic core - and F(0) - the membrane proton channel. F(1) has five subunits: alpha(3), beta(3), gamma(1), delta(1), epsilon(1). F(0) has three main subunits: a(1), b(2) and c(10-14). The alpha and beta chains form an alternating ring which encloses part of the gamma chain. F(1) is attached to F(0) by a central stalk formed by the gamma and epsilon chains, while a peripheral stalk is formed by the delta and b chains.

The protein localises to the cell membrane. Functionally, f(1)F(0) ATP synthase produces ATP from ADP in the presence of a proton or sodium gradient. F-type ATPases consist of two structural domains, F(1) containing the extramembraneous catalytic core and F(0) containing the membrane proton channel, linked together by a central stalk and a peripheral stalk. During catalysis, ATP synthesis in the catalytic domain of F(1) is coupled via a rotary mechanism of the central stalk subunits to proton translocation. Key component of the F(0) channel; it plays a direct role in translocation across the membrane. A homomeric c-ring of between 10-14 subunits forms the central stalk rotor element with the F(1) delta and epsilon subunits. The protein is ATP synthase subunit c of Bacillus anthracis (strain A0248).